A 389-amino-acid polypeptide reads, in one-letter code: Succinate--CoA ligase [ADP-forming] subunit beta (389 aa).

Positions 9-244 (KQLLAEYGIP…KTQEDETEVT (236 aa)) constitute an ATP-grasp domain. ATP is bound by residues K46, 53-55 (GRG), G102, and E107. The Mg(2+) site is built by N199 and D213. Residues N264 and 321–323 (GIV) each bind substrate.

The protein belongs to the succinate/malate CoA ligase beta subunit family. In terms of assembly, heterotetramer of two alpha and two beta subunits. Requires Mg(2+) as cofactor.

The enzyme catalyses succinate + ATP + CoA = succinyl-CoA + ADP + phosphate. It carries out the reaction GTP + succinate + CoA = succinyl-CoA + GDP + phosphate. The protein operates within carbohydrate metabolism; tricarboxylic acid cycle; succinate from succinyl-CoA (ligase route): step 1/1. Functionally, succinyl-CoA synthetase functions in the citric acid cycle (TCA), coupling the hydrolysis of succinyl-CoA to the synthesis of either ATP or GTP and thus represents the only step of substrate-level phosphorylation in the TCA. The beta subunit provides nucleotide specificity of the enzyme and binds the substrate succinate, while the binding sites for coenzyme A and phosphate are found in the alpha subunit. This chain is Succinate--CoA ligase [ADP-forming] subunit beta, found in Xanthomonas euvesicatoria pv. vesicatoria (strain 85-10) (Xanthomonas campestris pv. vesicatoria).